The chain runs to 61 residues: Potassium channel toxin alpha-KTx 3.18 (61 aa).

A signal peptide spans 1–23; the sequence is MKMFFTVLVTLFVCSMIIGICEG. Disulfide bonds link cysteine 30/cysteine 50, cysteine 36/cysteine 55, and cysteine 40/cysteine 57. A Lysine amide modification is found at lysine 60.

Expressed by the venom gland.

The protein localises to the secreted. Functionally, inhibits voltage-gated potassium channel rKv1.1/KCNA1 at nanomolar ranges (IC(50)=90 +-2 nM, reduction of current by 30% at 50 nM or toxin). The polypeptide is Potassium channel toxin alpha-KTx 3.18 (Mesobuthus eupeus (Lesser Asian scorpion)).